Consider the following 471-residue polypeptide: Sulfate adenylyltransferase subunit 1 (471 aa).

The tr-type G domain occupies 24 to 240 (KSLLRFLTCG…ESADVERELE (217 aa)). The segment at 33-40 (GSVDDGKS) is G1. Position 33–40 (33–40 (GSVDDGKS)) interacts with GTP. The tract at residues 91–95 (GITID) is G2. Residues 112 to 115 (DTPG) form a G3 region. Residues 112–116 (DTPGH) and 167–170 (NKMD) contribute to the GTP site. The G4 stretch occupies residues 167–170 (NKMD). The G5 stretch occupies residues 204 to 206 (SAL).

This sequence belongs to the TRAFAC class translation factor GTPase superfamily. Classic translation factor GTPase family. CysN/NodQ subfamily. As to quaternary structure, heterodimer composed of CysD, the smaller subunit, and CysN.

The catalysed reaction is sulfate + ATP + H(+) = adenosine 5'-phosphosulfate + diphosphate. It functions in the pathway sulfur metabolism; hydrogen sulfide biosynthesis; sulfite from sulfate: step 1/3. In terms of biological role, with CysD forms the ATP sulfurylase (ATPS) that catalyzes the adenylation of sulfate producing adenosine 5'-phosphosulfate (APS) and diphosphate, the first enzymatic step in sulfur assimilation pathway. APS synthesis involves the formation of a high-energy phosphoric-sulfuric acid anhydride bond driven by GTP hydrolysis by CysN coupled to ATP hydrolysis by CysD. This chain is Sulfate adenylyltransferase subunit 1, found in Aeromonas salmonicida (strain A449).